A 394-amino-acid chain; its full sequence is 5-azacytidine-induced protein 2 (394 aa).

The tract at residues 1 to 197 (MDALVEDDIC…IELRKAKQTD (197 aa)) is homodimerization. 2 coiled-coil regions span residues 40–76 (ALVT…LIAR) and 102–196 (DRDN…AKQT). Residues 216 to 257 (SDNMQHAYWELKREMSNLHLVTQVQAELLRKLKTSTAIKKAC) form an interaction with TBK1 and IKBKE region. Residues serine 318 and serine 355 each carry the phosphoserine modification. The interval 355–379 (SPPKSSETAFGETKSKTLPLPNLPP) is disordered.

Homodimer. Interacts with IKBKE, TBK1 and TICAM1. Interacts with TAX1BP1. Interacts with CALCOCO2. Ubiquitinated via 'Lys-48'-linked polyubiquitination by TRIM38, leading to its degradation.

The protein localises to the cytoplasm. In terms of biological role, adapter protein which binds TBK1 and IKBKE playing a role in antiviral innate immunity. Activates serine/threonine-protein kinase TBK1 and facilitates its oligomerization. Enhances the phosphorylation of NF-kappa-B p65 subunit RELA by TBK1. Promotes TBK1-induced as well as TNF-alpha or PMA-induced activation of NF-kappa-B. Participates in IFNB promoter activation via TICAM1. This is 5-azacytidine-induced protein 2 (AZI2) from Macaca fascicularis (Crab-eating macaque).